The following is a 360-amino-acid chain: MAALSLKGVKKSYGGAQYVLHGIDVDIADGEFVVLVGPSGCGKSTLLRMIAGLETVTEGEIAIGGRIVNALEPKDRDIAMVFQNYALYPHMTVAQNMGYGLKIRGVERALIDARVQAAAQILELGPLLARRPRELSGGQRQRVAMGRAIVREPSVFLFDEPLSNLDAKLRVQMRLEIQRLHARLATTSVYVTHDQIEAMTLAQRVIVMNRGDAEQIGAPVDVYEKPATTFVASFIGSPAMNLLHGRLSEDGAAFDVADGPRLPVAGAAGAGRGIAPGREWILGVRPEHMTPQPGEAFATLAVDSCELLGADNLAHGRWGAHDVAVRLPHAMRPTRGETLPVALPARHLHFFDPATGKRAG.

One can recognise an ABC transporter domain in the interval 4–235; the sequence is LSLKGVKKSY…PATTFVASFI (232 aa). An ATP-binding site is contributed by 37–44; sequence GPSGCGKS.

The protein belongs to the ABC transporter superfamily. sn-glycerol-3-phosphate importer (TC 3.A.1.1.3) family. As to quaternary structure, the complex is composed of two ATP-binding proteins (UgpC), two transmembrane proteins (UgpA and UgpE) and a solute-binding protein (UgpB).

The protein localises to the cell inner membrane. The enzyme catalyses sn-glycerol 3-phosphate(out) + ATP + H2O = sn-glycerol 3-phosphate(in) + ADP + phosphate + H(+). Its function is as follows. Part of the ABC transporter complex UgpBAEC involved in sn-glycerol-3-phosphate (G3P) import. Responsible for energy coupling to the transport system. This chain is sn-glycerol-3-phosphate import ATP-binding protein UgpC, found in Burkholderia mallei (strain ATCC 23344).